Here is a 91-residue protein sequence, read N- to C-terminus: Small ribosomal subunit protein uS15 (91 aa).

The protein belongs to the universal ribosomal protein uS15 family. Part of the 30S ribosomal subunit. Forms a bridge to the 50S subunit in the 70S ribosome, contacting the 23S rRNA.

Its function is as follows. One of the primary rRNA binding proteins, it binds directly to 16S rRNA where it helps nucleate assembly of the platform of the 30S subunit by binding and bridging several RNA helices of the 16S rRNA. Functionally, forms an intersubunit bridge (bridge B4) with the 23S rRNA of the 50S subunit in the ribosome. The sequence is that of Small ribosomal subunit protein uS15 from Sulfurimonas denitrificans (strain ATCC 33889 / DSM 1251) (Thiomicrospira denitrificans (strain ATCC 33889 / DSM 1251)).